Reading from the N-terminus, the 376-residue chain is Respiration factor 1 (376 aa).

Disordered regions lie at residues 1–23 (MKDL…DNRG), 88–107 (VNVT…NSTK), 258–279 (FKEK…TGSS), and 347–376 (GVNE…QHTN). The segment covering 354–376 (NSSNLNNSNSGTPHNHNQNQHTN) has biased composition (low complexity).

Its subcellular location is the cytoplasm. It is found in the nucleus. The protein localises to the mitochondrion. Functionally, mitochondrial and nuclear transcriptional activator required for respiratory growth. This Saccharomyces cerevisiae (strain YJM789) (Baker's yeast) protein is Respiration factor 1 (RSF1).